The sequence spans 484 residues: Oxysterol-binding protein-related protein 2 (484 aa).

Phosphoserine is present on residues serine 19 and serine 20. The disordered stretch occupies residues 35–61 (DLDTSKSTRSGKNGEKPQQENGIQKHR). Residues lysine 90 and 178-179 (HH) each bind a 1,2-diacyl-sn-glycero-3-phospho-(1D-myo-inositol-4,5-bisphosphate). 2 stretches are compositionally biased toward basic and acidic residues: residues 319–340 (KQEK…EKAN) and 424–450 (SQEK…EWRT). Disordered stretches follow at residues 319-348 (KQEK…GDVA) and 423-454 (ASQE…RWFS). 431 to 435 (EEKQR) serves as a coordination point for a 1,2-diacyl-sn-glycero-3-phospho-(1D-myo-inositol-4,5-bisphosphate).

Belongs to the OSBP family. Monomer. Homotetramer; phosphatidylinositol-4,5-bisphosphate binding promotes formation of stable tetramers. Interacts with DIAPH1. As to expression, detected in cochlea, in inner and outer hair cells in the organ of Corti (at protein level).

Its subcellular location is the cytoplasm. It localises to the cytosol. The protein localises to the lipid droplet. The protein resides in the cell membrane. Intracellular transport protein that binds sterols and phospholipids and mediates lipid transport between intracellular compartments. Increases plasma membrane cholesterol levels and decreases phosphatidylinositol-4,5-bisphosphate levels in the cell membrane. Binds phosphoinositides, such as phosphatidylinositol-4,5-bisphosphate. Exhibits strong binding to phosphatidic acid and weak binding to phosphatidylinositol 3-phosphate. Binds cholesterol, dehydroergosterol, 22(R)-hydroxycholesterol and 25-hydroxycholesterol (in vitro). This Mus musculus (Mouse) protein is Oxysterol-binding protein-related protein 2 (Osbpl2).